Reading from the N-terminus, the 373-residue chain is Lipoyl synthase (373 aa).

The interval 14-36 (VSNDHPSSSPLQPGVKQSGEDKI) is disordered. [4Fe-4S] cluster-binding residues include C81, C86, C92, C107, C111, C114, and S323. Positions 93-312 (FSHGTATFMI…EEYGMALGFS (220 aa)) constitute a Radical SAM core domain. Positions 346 to 373 (PAVSSTEHRERNTIASKSASKTESIHHR) are disordered. Over residues 358 to 367 (TIASKSASKT) the composition is skewed to polar residues.

Belongs to the radical SAM superfamily. Lipoyl synthase family. [4Fe-4S] cluster is required as a cofactor.

It is found in the cytoplasm. The catalysed reaction is [[Fe-S] cluster scaffold protein carrying a second [4Fe-4S](2+) cluster] + N(6)-octanoyl-L-lysyl-[protein] + 2 oxidized [2Fe-2S]-[ferredoxin] + 2 S-adenosyl-L-methionine + 4 H(+) = [[Fe-S] cluster scaffold protein] + N(6)-[(R)-dihydrolipoyl]-L-lysyl-[protein] + 4 Fe(3+) + 2 hydrogen sulfide + 2 5'-deoxyadenosine + 2 L-methionine + 2 reduced [2Fe-2S]-[ferredoxin]. Its pathway is protein modification; protein lipoylation via endogenous pathway; protein N(6)-(lipoyl)lysine from octanoyl-[acyl-carrier-protein]: step 2/2. Catalyzes the radical-mediated insertion of two sulfur atoms into the C-6 and C-8 positions of the octanoyl moiety bound to the lipoyl domains of lipoate-dependent enzymes, thereby converting the octanoylated domains into lipoylated derivatives. This Xylella fastidiosa (strain M23) protein is Lipoyl synthase.